Here is a 380-residue protein sequence, read N- to C-terminus: Proline iminopeptidase (380 aa).

One can recognise an AB hydrolase-1 domain in the interval 98–360 (PVVFLHGGPG…IVYDAGHSAN (263 aa)). The Nucleophile role is filled by S172. The active site involves D329. H357 functions as the Proton donor in the catalytic mechanism.

This sequence belongs to the peptidase S33 family.

Its subcellular location is the cytoplasm. It catalyses the reaction Release of N-terminal proline from a peptide.. Its function is as follows. Specifically catalyzes the removal of N-terminal proline residues from peptides. The sequence is that of Proline iminopeptidase (PIP) from Arabidopsis thaliana (Mouse-ear cress).